A 398-amino-acid polypeptide reads, in one-letter code: Isopenicillin N epimerase (398 aa).

N6-(pyridoxal phosphate)lysine is present on lysine 219. The tract at residues 243–264 (PQVSWGYRPDGENPSDERNRFG) is disordered. The segment covering 251-264 (PDGENPSDERNRFG) has biased composition (basic and acidic residues).

Belongs to the class-V pyridoxal-phosphate-dependent aminotransferase family. Pyridoxal 5'-phosphate serves as cofactor.

It carries out the reaction isopenicillin N = penicillin N. It functions in the pathway antibiotic biosynthesis; cephalosporin C biosynthesis. Its function is as follows. Catalyzes the reversible isomerization between isopenicillin N and penicillin N. In Amycolatopsis lactamdurans (Nocardia lactamdurans), this protein is Isopenicillin N epimerase (cefD).